Consider the following 143-residue polypeptide: Transmembrane protein 80 (143 aa).

Transmembrane regions (helical) follow at residues 21-41 (MLFY…LLMI), 55-75 (LVLD…RLYL), 99-119 (ALLS…DWAL), and 121-141 (ATLL…IAAF).

It is found in the membrane. Its subcellular location is the cell projection. The protein localises to the cilium. This is Transmembrane protein 80 from Homo sapiens (Human).